The following is a 268-amino-acid chain: MAVGKNKGLSKGGKKGGKKKVVDPFSRKDWYDVKAPNMFQTRQIGKTLVNRTQGQRIASDYLKGRVFEVSLADLQKDIDPERSFRKFRLIAEDVQDRNVLCNFHGMDLTTDKYRSMVKKWQTLIEAIVEAKTIDGYLLRVFCIGFTAKDQQSQRKTCYAQQSQVRKIRARMTDIITNEVSGADLKQLVNKLALDSIAKDIEKSCQRIYPLHDVYIRKVKVLKKPRFDVSKLLELHGDGGGKSVEAVVSSEGAVIDRPEGYEPPVQEAV.

Residues 1–21 (MAVGKNKGLSKGGKKGGKKKV) are disordered.

Belongs to the eukaryotic ribosomal protein eS1 family. Component of the small ribosomal subunit. Mature ribosomes consist of a small (40S) and a large (60S) subunit. The 40S subunit contains about 33 different proteins and 1 molecule of RNA (18S). The 60S subunit contains about 49 different proteins and 3 molecules of RNA (28S, 5.8S and 5S).

It localises to the cytoplasm. Its function is as follows. Essential for oogenesis; required for late follicle cell development. The protein is Small ribosomal subunit protein eS1 of Drosophila sechellia (Fruit fly).